Here is a 348-residue protein sequence, read N- to C-terminus: WD repeat-containing protein JIP5 (348 aa).

WD repeat units lie at residues 5–44 (KLKNQPFDVAFHPKEPVVFSSLLTGQVCAWSYDDATGETS), 51–90 (PSKRTARALSIEENGDEIWMGGKSGSLFQLSTRDGSMTRE), 94–132 (AHECPINRVYCVNRNLVATGDDDGVIKLWDPRQADSIRT), 135–174 (QHFDYISDFTYFDDKRQLVATSGDGHLSVIDIRSNKSTPL), 179–218 (DQEDELLSIVPIKGGQKAIVGSGLGILSVWNRQMGWADSV), 223–261 (GHPASIDAIVALTPDIIATGSEDGMIRVIQVLPHKFLGV), and 264–304 (THEE…EDSD). Over residues 299-318 (LFEDSDEDDEMEEDEPDSDE) the composition is skewed to acidic residues. A disordered region spans residues 299–348 (LFEDSDEDDEMEEDEPDSDEEKSKKKKKDNGMKDMSRGQAENDGSFFADL).

It belongs to the WD repeat WDR55 family.

Its subcellular location is the nucleus. It localises to the nucleolus. This chain is WD repeat-containing protein JIP5 (JIP5), found in Cryptococcus neoformans var. neoformans serotype D (strain JEC21 / ATCC MYA-565) (Filobasidiella neoformans).